Reading from the N-terminus, the 416-residue chain is Lipoyl synthase, mitochondrial (416 aa).

The transit peptide at 1–33 (MAAPTRSLRRLSSFRTTISPSLTVTAPIGCRSY) directs the protein to the mitochondrion. Residues C132, C137, C143, C163, C167, C170, and S378 each contribute to the [4Fe-4S] cluster site. One can recognise a Radical SAM core domain in the interval 148 to 367 (DKSSATATIM…RQRALDMGFL (220 aa)). The interval 396-416 (GSGTAERTVDQTAATTDEATR) is disordered. Over residues 405 to 416 (DQTAATTDEATR) the composition is skewed to polar residues.

This sequence belongs to the radical SAM superfamily. Lipoyl synthase family. Requires [4Fe-4S] cluster as cofactor.

The protein localises to the mitochondrion. The enzyme catalyses [[Fe-S] cluster scaffold protein carrying a second [4Fe-4S](2+) cluster] + N(6)-octanoyl-L-lysyl-[protein] + 2 oxidized [2Fe-2S]-[ferredoxin] + 2 S-adenosyl-L-methionine + 4 H(+) = [[Fe-S] cluster scaffold protein] + N(6)-[(R)-dihydrolipoyl]-L-lysyl-[protein] + 4 Fe(3+) + 2 hydrogen sulfide + 2 5'-deoxyadenosine + 2 L-methionine + 2 reduced [2Fe-2S]-[ferredoxin]. Its pathway is protein modification; protein lipoylation via endogenous pathway; protein N(6)-(lipoyl)lysine from octanoyl-[acyl-carrier-protein]: step 2/2. In terms of biological role, catalyzes the radical-mediated insertion of two sulfur atoms into the C-6 and C-8 positions of the octanoyl moiety bound to the lipoyl domains of lipoate-dependent enzymes, thereby converting the octanoylated domains into lipoylated derivatives. This Penicillium rubens (strain ATCC 28089 / DSM 1075 / NRRL 1951 / Wisconsin 54-1255) (Penicillium chrysogenum) protein is Lipoyl synthase, mitochondrial.